Here is a 717-residue protein sequence, read N- to C-terminus: Pre-mRNA-splicing factor ATP-dependent RNA helicase DEAH10 (717 aa).

The tract at residues 1–29 (MPSMAQGELKSFVQNSRPNPKSPTVSPFS) is disordered. Residues 12–29 (FVQNSRPNPKSPTVSPFS) show a composition bias toward polar residues. The Helicase ATP-binding domain occupies 51 to 256 (VEEVQKNDIL…FGGAKAVHVQ (206 aa)). 64–71 (GETGSGKT) serves as a coordination point for ATP. The short motif at 162-165 (DEAH) is the DEAH box element. The region spanning 278-453 (TLVTIFQIHF…NIILQLKALG (176 aa)) is the Helicase C-terminal domain.

The protein belongs to the DEAD box helicase family. DEAH subfamily. PRP22 sub-subfamily. Widely expressed but spatially and temporally regulated during development.

It is found in the nucleus. It localises to the nucleolus. It carries out the reaction ATP + H2O = ADP + phosphate + H(+). Involved in pre-mRNA splicing. Plays a role during development in processes such as meristem maintenance, leaf morphogenesis and root morphogenesis. The protein is Pre-mRNA-splicing factor ATP-dependent RNA helicase DEAH10 of Arabidopsis thaliana (Mouse-ear cress).